Consider the following 259-residue polypeptide: Putative zinc metalloprotease Rip2 (259 aa).

2 helical membrane passes run 14 to 34 (PIFL…WLAG) and 39 to 59 (PLAY…SLCL). A Zn(2+)-binding site is contributed by H60. The active site involves E61. Position 64 (H64) interacts with Zn(2+). 4 consecutive transmembrane segments (helical) span residues 97 to 117 (GLPM…AVYV), 128 to 148 (TLVS…LLAA), 156 to 176 (IHAV…TALV), and 215 to 235 (LVLF…YWLF).

This sequence belongs to the peptidase M50B family. It depends on Zn(2+) as a cofactor.

The protein resides in the cell membrane. This chain is Putative zinc metalloprotease Rip2 (rip2), found in Mycobacterium tuberculosis (strain ATCC 35801 / TMC 107 / Erdman).